Consider the following 403-residue polypeptide: Histidine--tRNA ligase (403 aa).

It belongs to the class-II aminoacyl-tRNA synthetase family. As to quaternary structure, homodimer.

It localises to the cytoplasm. It carries out the reaction tRNA(His) + L-histidine + ATP = L-histidyl-tRNA(His) + AMP + diphosphate + H(+). The protein is Histidine--tRNA ligase of Sulfurovum sp. (strain NBC37-1).